Here is a 447-residue protein sequence, read N- to C-terminus: Elongation factor 1-alpha (447 aa).

Positions 5-230 (KIHISIVVIG…DQISEPKRPS (226 aa)) constitute a tr-type G domain. A G1 region spans residues 14–21 (GHVDSGKS). A GTP-binding site is contributed by 14–21 (GHVDSGKS). K55 is modified (N6,N6-dimethyllysine). The segment at 70 to 74 (GITID) is G2. Position 79 is an N6,N6,N6-trimethyllysine (K79). The tract at residues 91 to 94 (DAPG) is G3. GTP contacts are provided by residues 91–95 (DAPGH) and 153–156 (NKMD). The G4 stretch occupies residues 153–156 (NKMD). K187 is subject to N6,N6,N6-trimethyllysine. The segment at 194-196 (SGF) is G5. Position 261 is an N6-methyllysine (K261). Position 289 is a 5-glutamyl glycerylphosphorylethanolamine (E289). K306 is subject to N6,N6,N6-trimethyllysine. E362 carries the post-translational modification 5-glutamyl glycerylphosphorylethanolamine. N6,N6,N6-trimethyllysine is present on K396.

It belongs to the TRAFAC class translation factor GTPase superfamily. Classic translation factor GTPase family. EF-Tu/EF-1A subfamily.

It localises to the cytoplasm. Functionally, this protein promotes the GTP-dependent binding of aminoacyl-tRNA to the A-site of ribosomes during protein biosynthesis. In Daucus carota (Wild carrot), this protein is Elongation factor 1-alpha.